Consider the following 336-residue polypeptide: Lipoyl synthase (336 aa).

7 residues coordinate [4Fe-4S] cluster: Cys81, Cys86, Cys92, Cys107, Cys111, Cys114, and Ser323. The 220-residue stretch at 93–312 (FGHGTATFMI…EDYGYELGFS (220 aa)) folds into the Radical SAM core domain.

The protein belongs to the radical SAM superfamily. Lipoyl synthase family. The cofactor is [4Fe-4S] cluster.

It localises to the cytoplasm. It catalyses the reaction [[Fe-S] cluster scaffold protein carrying a second [4Fe-4S](2+) cluster] + N(6)-octanoyl-L-lysyl-[protein] + 2 oxidized [2Fe-2S]-[ferredoxin] + 2 S-adenosyl-L-methionine + 4 H(+) = [[Fe-S] cluster scaffold protein] + N(6)-[(R)-dihydrolipoyl]-L-lysyl-[protein] + 4 Fe(3+) + 2 hydrogen sulfide + 2 5'-deoxyadenosine + 2 L-methionine + 2 reduced [2Fe-2S]-[ferredoxin]. It functions in the pathway protein modification; protein lipoylation via endogenous pathway; protein N(6)-(lipoyl)lysine from octanoyl-[acyl-carrier-protein]: step 2/2. Functionally, catalyzes the radical-mediated insertion of two sulfur atoms into the C-6 and C-8 positions of the octanoyl moiety bound to the lipoyl domains of lipoate-dependent enzymes, thereby converting the octanoylated domains into lipoylated derivatives. The sequence is that of Lipoyl synthase from Stenotrophomonas maltophilia (strain R551-3).